A 267-amino-acid chain; its full sequence is Dynein axonemal assembly factor 19 homolog (267 aa).

Disordered regions lie at residues 86–111 (ISQS…RDWR) and 226–250 (HQGK…VDPC).

This sequence belongs to the DNAAF19/PR46b family. As to quaternary structure, homodimer.

Its subcellular location is the cytoplasm. It is found in the cell projection. It localises to the cilium. The protein localises to the flagellum. Functionally, dynein-attachment factor required for cilia motility. This is Dynein axonemal assembly factor 19 homolog (PR46b) from Chlamydomonas reinhardtii (Chlamydomonas smithii).